The sequence spans 258 residues: uncharacterized protein (258 aa).

4 consecutive transmembrane segments (helical) span residues 33-53 (LFVI…VTTN), 59-79 (FDSW…IFVF), 88-108 (LLYL…FSFF), and 140-160 (IIAL…WLIQ). Positions 237–258 (NNKINSELQPPSILNKNSKPIE) are disordered. Residues 242–258 (SELQPPSILNKNSKPIE) are compositionally biased toward polar residues.

Its subcellular location is the membrane. This is an uncharacterized protein from Dictyostelium discoideum (Social amoeba).